Consider the following 69-residue polypeptide: Brevinin-1CG1 (69 aa).

The signal sequence occupies residues methionine 1–cysteine 22. A propeptide spans glutamate 23–glutamate 43 (removed in mature form). Cysteines 63 and 69 form a disulfide.

Expressed by the skin glands.

It localises to the secreted. In terms of biological role, antimicrobial peptide. Active against Gram-positive bacteria R.rhodochrous X15 and B.licheniformis X39 and against Gram-negative bacterium E.coli ATCC 25922. Has antifungal activity against a slime mold isolate. Has weak hemolytic activity against human erythrocytes. The protein is Brevinin-1CG1 of Amolops chunganensis (Chungan torrent frog).